Consider the following 38-residue polypeptide: Large ribosomal subunit protein bL36 (38 aa).

Belongs to the bacterial ribosomal protein bL36 family.

This chain is Large ribosomal subunit protein bL36, found in Sorangium cellulosum (strain So ce56) (Polyangium cellulosum (strain So ce56)).